The sequence spans 191 residues: Peptidyl-tRNA hydrolase (191 aa).

Tyr17 contacts tRNA. The active-site Proton acceptor is the His22. 3 residues coordinate tRNA: Tyr68, Asn70, and Asn116.

This sequence belongs to the PTH family. In terms of assembly, monomer.

It is found in the cytoplasm. It catalyses the reaction an N-acyl-L-alpha-aminoacyl-tRNA + H2O = an N-acyl-L-amino acid + a tRNA + H(+). Functionally, hydrolyzes ribosome-free peptidyl-tRNAs (with 1 or more amino acids incorporated), which drop off the ribosome during protein synthesis, or as a result of ribosome stalling. Catalyzes the release of premature peptidyl moieties from peptidyl-tRNA molecules trapped in stalled 50S ribosomal subunits, and thus maintains levels of free tRNAs and 50S ribosomes. This is Peptidyl-tRNA hydrolase from Francisella tularensis subsp. holarctica (strain FTNF002-00 / FTA).